Reading from the N-terminus, the 58-residue chain is Attractin (58 aa).

Disulfide bonds link C4-C41, C13-C33, and C20-C26. N-linked (GlcNAc...) asparagine glycosylation occurs at N8.

As to expression, produced by the albumen gland of the egg cordons.

The protein localises to the secreted. Functionally, water-borne pheromone that attract the marine mollusk Aplysia into breeding aggregations and coordinate male and female reproductive behavior within the aggregation. The sequence is that of Attractin (ATT) from Aplysia fasciata (Mottled sea hare).